Here is a 221-residue protein sequence, read N- to C-terminus: Carbonic anhydrase (221 aa).

Residues cysteine 38, aspartate 40, histidine 99, and cysteine 102 each coordinate Zn(2+).

The protein belongs to the beta-class carbonic anhydrase family. The cofactor is Zn(2+).

The catalysed reaction is hydrogencarbonate + H(+) = CO2 + H2O. In Helicobacter pylori (strain ATCC 700392 / 26695) (Campylobacter pylori), this protein is Carbonic anhydrase (cynT).